Here is a 412-residue protein sequence, read N- to C-terminus: Phosphoglycerate kinase (412 aa).

Residues 22–24 (DFN), arginine 37, 60–63 (HLGK), arginine 120, and arginine 172 each bind substrate. ATP is bound by residues lysine 223, glycine 310, glutamate 341, and 368–371 (GGDS).

It belongs to the phosphoglycerate kinase family. In terms of assembly, monomer.

Its subcellular location is the cytoplasm. It catalyses the reaction (2R)-3-phosphoglycerate + ATP = (2R)-3-phospho-glyceroyl phosphate + ADP. It functions in the pathway carbohydrate degradation; glycolysis; pyruvate from D-glyceraldehyde 3-phosphate: step 2/5. This Spiroplasma citri protein is Phosphoglycerate kinase.